We begin with the raw amino-acid sequence, 123 residues long: uncharacterized protein (123 aa).

The N-terminal stretch at 1-25 is a signal peptide; it reads MKHGIKALLITLSLACAGMSHSALA. Residues 40-53 show a composition bias toward low complexity; the sequence is EAPAAQSKAAVPAK. Residues 40–62 are disordered; the sequence is EAPAAQSKAAVPAKASDEEGTRV. HhH domains lie at 60-90 and 91-120; these read TRVS…IVSY and REEY…NLAV.

This is an uncharacterized protein from Escherichia coli (strain K12).